We begin with the raw amino-acid sequence, 80 residues long: Large ribosomal subunit protein bL31B (80 aa).

This sequence belongs to the bacterial ribosomal protein bL31 family. Type B subfamily. As to quaternary structure, part of the 50S ribosomal subunit.

This Xanthomonas axonopodis pv. citri (strain 306) protein is Large ribosomal subunit protein bL31B.